Here is a 346-residue protein sequence, read N- to C-terminus: Phosphoribosylformylglycinamidine cyclo-ligase (346 aa).

It belongs to the AIR synthase family.

The protein resides in the cytoplasm. The catalysed reaction is 2-formamido-N(1)-(5-O-phospho-beta-D-ribosyl)acetamidine + ATP = 5-amino-1-(5-phospho-beta-D-ribosyl)imidazole + ADP + phosphate + H(+). It functions in the pathway purine metabolism; IMP biosynthesis via de novo pathway; 5-amino-1-(5-phospho-D-ribosyl)imidazole from N(2)-formyl-N(1)-(5-phospho-D-ribosyl)glycinamide: step 2/2. This is Phosphoribosylformylglycinamidine cyclo-ligase from Vibrio atlanticus (strain LGP32) (Vibrio splendidus (strain Mel32)).